The primary structure comprises 616 residues: Glutamine--fructose-6-phosphate aminotransferase [isomerizing] (616 aa).

The active-site Nucleophile; for GATase activity is the cysteine 2. One can recognise a Glutamine amidotransferase type-2 domain in the interval 2–222 (CGIIGYSGPR…QERIVALSGD (221 aa)). Positions 70-89 (TGIGHTRWATHGEPSDRNAH) are disordered. 2 SIS domains span residues 289–428 (IRDD…LRGF) and 461–606 (LAHW…VDRP). The active-site For Fru-6P isomerization activity is the lysine 611.

In terms of assembly, homodimer.

It localises to the cytoplasm. It carries out the reaction D-fructose 6-phosphate + L-glutamine = D-glucosamine 6-phosphate + L-glutamate. Catalyzes the first step in hexosamine metabolism, converting fructose-6P into glucosamine-6P using glutamine as a nitrogen source. The chain is Glutamine--fructose-6-phosphate aminotransferase [isomerizing] from Tropheryma whipplei (strain Twist) (Whipple's bacillus).